Consider the following 219-residue polypeptide: Poxin (219 aa).

His17 functions as the Proton donor in the catalytic mechanism. Tyr138 (shared with catalytic histidine of dimeric partner) is an active-site residue. The active-site Proton acceptor; shared with catalytic histidine of dimeric partner is the Lys142.

Belongs to the poxin family. As to quaternary structure, homodimer.

It carries out the reaction 2',3'-cGAMP + H2O = Gp(2'-5')Ap(3') + H(+). Functionally, nuclease that is responsible for viral evasion of host cGAS-STING innate immunity. Cleaves 2',3'-cGAMP which is produced by host cGAS following recognition of cytosolic DNA and blocks the subsequent 2',3'-cGAMP-mediated activation of TMEM173/STING, which normally spreads to adjacent cells and activates the interferon and NF-kappa-B immune responses. This is Poxin (OPG188) from Homo sapiens (Human).